A 771-amino-acid chain; its full sequence is Rho GTPase-activating protein 26 (771 aa).

In terms of domain architecture, BAR spans 7 to 262 (EFSDCYLDSP…MKENPHEHLA (256 aa)). The PH domain maps to 265–369 (PFTMEGYLYV…WMEAMDGREP (105 aa)). Residues 383–568 (AQLDNIGFSI…IIIENYEEMF (186 aa)) form the Rho-GAP domain. The disordered stretch occupies residues 575-712 (PQTNSQLHLS…SSTSSDSSPV (138 aa)). Residues 608–617 (HSSEKEEKRN) show a composition bias toward basic and acidic residues. Low complexity predominate over residues 618–637 (SVNSSAESVSSSNANSSVNS). 2 stretches are compositionally biased toward polar residues: residues 638-650 (TCTQ…NLNA) and 662-671 (RPNSLLNPKN). Composition is skewed to low complexity over residues 673-683 (SGLLPSSLNPS) and 691-712 (PMVS…SSPV). In terms of domain architecture, SH3 spans 713–771 (SVPRKAKALYACKAEHDSELSFSAGTVFENVCPSQEPGWLEGTLNGKTGLIPENYVEFL).

It is found in the cell junction. It localises to the focal adhesion. The protein resides in the cytoplasm. Its subcellular location is the cytoskeleton. The protein localises to the endosome membrane. Its function is as follows. GTPase-activating protein for rhoa and cdc42. May be involved in the regulation of neosynthesized protein export through a Rab-endososomal dependent export route. The protein is Rho GTPase-activating protein 26 (arhgap26) of Xenopus laevis (African clawed frog).